A 604-amino-acid polypeptide reads, in one-letter code: Elongation factor 4 (604 aa).

Residues 7 to 189 (SRLRNFCIIA…AVVDRIPPPA (183 aa)) form the tr-type G domain. Residues 19 to 24 (DHGKST) and 136 to 139 (NKID) each bind GTP.

The protein belongs to the TRAFAC class translation factor GTPase superfamily. Classic translation factor GTPase family. LepA subfamily.

The protein resides in the cell inner membrane. It carries out the reaction GTP + H2O = GDP + phosphate + H(+). In terms of biological role, required for accurate and efficient protein synthesis under certain stress conditions. May act as a fidelity factor of the translation reaction, by catalyzing a one-codon backward translocation of tRNAs on improperly translocated ribosomes. Back-translocation proceeds from a post-translocation (POST) complex to a pre-translocation (PRE) complex, thus giving elongation factor G a second chance to translocate the tRNAs correctly. Binds to ribosomes in a GTP-dependent manner. This chain is Elongation factor 4, found in Prochlorococcus marinus (strain MIT 9303).